A 197-amino-acid chain; its full sequence is Proteasome subunit beta 1 (197 aa).

A propeptide spans 1–6 (removed in mature form; by autocatalysis); the sequence is MNRKTG. Thr7 (nucleophile) is an active-site residue.

It belongs to the peptidase T1B family. As to quaternary structure, the 20S proteasome core is composed of 14 alpha and 14 beta subunits that assemble into four stacked heptameric rings, resulting in a barrel-shaped structure. The two inner rings, each composed of seven catalytic beta subunits, are sandwiched by two outer rings, each composed of seven alpha subunits. The catalytic chamber with the active sites is on the inside of the barrel. Has a gated structure, the ends of the cylinder being occluded by the N-termini of the alpha-subunits. Is capped at one or both ends by the proteasome regulatory ATPase, PAN.

It is found in the cytoplasm. The enzyme catalyses Cleavage of peptide bonds with very broad specificity.. With respect to regulation, the formation of the proteasomal ATPase PAN-20S proteasome complex, via the docking of the C-termini of PAN into the intersubunit pockets in the alpha-rings, triggers opening of the gate for substrate entry. Interconversion between the open-gate and close-gate conformations leads to a dynamic regulation of the 20S proteasome proteolysis activity. Its function is as follows. Component of the proteasome core, a large protease complex with broad specificity involved in protein degradation. The chain is Proteasome subunit beta 1 from Pyrococcus abyssi (strain GE5 / Orsay).